We begin with the raw amino-acid sequence, 412 residues long: Multifunctional CCA protein (412 aa).

The ATP site is built by Gly8 and Arg11. CTP contacts are provided by Gly8 and Arg11. Mg(2+)-binding residues include Asp21 and Asp23. ATP contacts are provided by Arg91, Arg137, and Arg140. 3 residues coordinate CTP: Arg91, Arg137, and Arg140. The region spanning 228–329 is the HD domain; that stretch reads TGIHTLMTLS…VKLFDSIDAW (102 aa).

Belongs to the tRNA nucleotidyltransferase/poly(A) polymerase family. Bacterial CCA-adding enzyme type 1 subfamily. Monomer. Can also form homodimers and oligomers. The cofactor is Mg(2+). Ni(2+) serves as cofactor.

It catalyses the reaction a tRNA precursor + 2 CTP + ATP = a tRNA with a 3' CCA end + 3 diphosphate. The catalysed reaction is a tRNA with a 3' CCA end + 2 CTP + ATP = a tRNA with a 3' CCACCA end + 3 diphosphate. Functionally, catalyzes the addition and repair of the essential 3'-terminal CCA sequence in tRNAs without using a nucleic acid template. Adds these three nucleotides in the order of C, C, and A to the tRNA nucleotide-73, using CTP and ATP as substrates and producing inorganic pyrophosphate. tRNA 3'-terminal CCA addition is required both for tRNA processing and repair. Also involved in tRNA surveillance by mediating tandem CCA addition to generate a CCACCA at the 3' terminus of unstable tRNAs. While stable tRNAs receive only 3'-terminal CCA, unstable tRNAs are marked with CCACCA and rapidly degraded. This is Multifunctional CCA protein from Shigella flexneri.